Reading from the N-terminus, the 245-residue chain is Ureidoacrylate amidohydrolase RutB (245 aa).

The Proton acceptor role is filled by aspartate 38. The active site involves lysine 147. Catalysis depends on cysteine 180, which acts as the Nucleophile.

Belongs to the isochorismatase family. RutB subfamily.

It carries out the reaction (Z)-3-ureidoacrylate + H2O + H(+) = (Z)-3-aminoacrylate + NH4(+) + CO2. It catalyses the reaction (Z)-3-ureidoacrylate + H2O = (Z)-3-aminoacrylate + carbamate + H(+). The catalysed reaction is (Z)-2-methylureidoacrylate + H2O + H(+) = (Z)-2-methylaminoacrylate + NH4(+) + CO2. Hydrolyzes ureidoacrylate to form aminoacrylate and carbamate. The carbamate hydrolyzes spontaneously, thereby releasing one of the nitrogen atoms of the pyrimidine ring as ammonia and one of its carbon atoms as CO2. This chain is Ureidoacrylate amidohydrolase RutB, found in Acinetobacter baylyi (strain ATCC 33305 / BD413 / ADP1).